A 346-amino-acid chain; its full sequence is Calcium homeostasis modulator protein 1 (346 aa).

Residues methionine 1–asparagine 21 are Cytoplasmic-facing. The central pore stretch occupies residues glutamine 10 to alanine 37. A helical transmembrane segment spans residues glycine 22–alanine 37. The Extracellular portion of the chain corresponds to phenylalanine 38 to asparagine 49. 2 disulfides stabilise this stretch: cysteine 42–cysteine 127 and cysteine 44–cysteine 161. Residues alanine 50–asparagine 72 form a helical membrane-spanning segment. The tract at residues valine 63–valine 70 is phospholipid-binding. The Cytoplasmic portion of the chain corresponds to asparagine 73 to methionine 99. The chain crosses the membrane as a helical span at residues phenylalanine 100–phenylalanine 125. Cysteine 101 carries S-palmitoyl cysteine lipidation. The segment at glutamine 105–valine 117 is phospholipid-binding. Topologically, residues leucine 126 to leucine 180 are extracellular. Residue asparagine 140 is glycosylated (N-linked (GlcNAc...) asparagine). Residues arginine 181–arginine 206 traverse the membrane as a helical segment. The tract at residues valine 192–valine 202 is phospholipid-binding. The Cytoplasmic segment spans residues proline 207–valine 346. Residue cysteine 208 is the site of S-palmitoyl cysteine attachment. The disordered stretch occupies residues leucine 313–valine 346.

Belongs to the CALHM family. As to quaternary structure, oligomerizes to form hexamers and octamers. Does not form gap junctions. Associates with CALHM3 as a pore-forming subunit in a hetero-hexameric channel complex. Post-translationally, N-glycosylated. Assembly with CALHM3 is associated with N-glycan remodeling and formation of hybrid complex- and high mannose-type glycochains. This N-glycan processing regulates channel trafficking and gating kinetics. Palmitoylated by ZDHHC3, ZDHHC20 and possibly ZDHHC7. Palmitoylation regulates voltage-dependent gating of the channel by shifting it toward more depolarized potentials. In terms of tissue distribution, predominantly expressed in adult brain. Detected also in retinoic acid-differentiated SH-SY5Y cells. Specifically expressed in circumvallate taste bud cells.

The protein resides in the cell membrane. It is found in the endoplasmic reticulum membrane. Its subcellular location is the basolateral cell membrane. The catalysed reaction is ATP(in) = ATP(out). It catalyses the reaction Ca(2+)(in) = Ca(2+)(out). It carries out the reaction Mg(2+)(in) = Mg(2+)(out). The enzyme catalyses Na(+)(in) = Na(+)(out). The catalysed reaction is K(+)(in) = K(+)(out). It catalyses the reaction Li(+)(in) = Li(+)(out). It carries out the reaction Rb(+)(in) = Rb(+)(out). The enzyme catalyses Cs(+)(in) = Cs(+)(out). The catalysed reaction is chloride(in) = chloride(out). Regulated by membrane voltage and extracellular Ca(2+). Inhibited by Gd(3+), ruthenium red, and Zn(2+) and partially inhibited by 2-aminoethoxydiphenyl borate. Pore-forming subunit of gustatory voltage-gated ion channels required for sensory perception of sweet, bitter and umami tastes. With CALHM3 forms a fast-activating voltage-gated ATP-release channel in type II taste bud cells, ATP acting as a neurotransmitter to activate afferent neural gustatory pathways. Acts both as a voltage-gated and calcium-activated ion channel: mediates neuronal excitability in response to membrane depolarization and low extracellular Ca(2+) concentration. Has poor ion selectivity and forms a wide pore (around 14 Angstroms) that mediates permeation of small ions including Ca(2+), Na(+), K(+) and Cl(-), as well as larger ions such as ATP(4-). Mediates Ca(2+) influx and downstream activation of the ERK1 and ERK2 cascade in neurons. Triggers endoplasmic reticulum stress by reducing the Ca(2+) content of the endoplasmic reticulum. May indirectly control amyloid precursor protein (APP) proteolysis and aggregated amyloid-beta (Abeta) peptides levels in a Ca(2+)-dependent manner. The polypeptide is Calcium homeostasis modulator protein 1 (Homo sapiens (Human)).